The following is a 160-amino-acid chain: Ribosomal RNA large subunit methyltransferase H (160 aa).

S-adenosyl-L-methionine contacts are provided by residues Leu-77, Gly-109, and Leu-128–Phe-133.

Belongs to the RNA methyltransferase RlmH family. Homodimer.

It is found in the cytoplasm. The catalysed reaction is pseudouridine(1915) in 23S rRNA + S-adenosyl-L-methionine = N(3)-methylpseudouridine(1915) in 23S rRNA + S-adenosyl-L-homocysteine + H(+). Specifically methylates the pseudouridine at position 1915 (m3Psi1915) in 23S rRNA. The chain is Ribosomal RNA large subunit methyltransferase H from Desulforamulus reducens (strain ATCC BAA-1160 / DSM 100696 / MI-1) (Desulfotomaculum reducens).